A 344-amino-acid chain; its full sequence is Dihydroorotase (344 aa).

Positions 13 and 15 each coordinate Zn(2+). Substrate-binding positions include H15–R17 and N41. Residues K98, H135, and H173 each contribute to the Zn(2+) site. N6-carboxylysine is present on K98. H135 provides a ligand contact to substrate. L218 lines the substrate pocket. Residue D246 coordinates Zn(2+). Residue D246 is part of the active site. The substrate site is built by H250 and A262.

Belongs to the metallo-dependent hydrolases superfamily. DHOase family. Class II DHOase subfamily. As to quaternary structure, homodimer. It depends on Zn(2+) as a cofactor.

The catalysed reaction is (S)-dihydroorotate + H2O = N-carbamoyl-L-aspartate + H(+). It functions in the pathway pyrimidine metabolism; UMP biosynthesis via de novo pathway; (S)-dihydroorotate from bicarbonate: step 3/3. Its function is as follows. Catalyzes the reversible cyclization of carbamoyl aspartate to dihydroorotate. The polypeptide is Dihydroorotase (Pseudoalteromonas atlantica (strain T6c / ATCC BAA-1087)).